The primary structure comprises 88 residues: Small ribosomal subunit protein uS15 (88 aa).

Positions 1 to 23 (MIASSVKAEVVKSNARSANDTGS) are disordered. The span at 14–23 (NARSANDTGS) shows a compositional bias: polar residues.

It belongs to the universal ribosomal protein uS15 family. As to quaternary structure, part of the 30S ribosomal subunit. Forms a bridge to the 50S subunit in the 70S ribosome, contacting the 23S rRNA.

Its function is as follows. One of the primary rRNA binding proteins, it binds directly to 16S rRNA where it helps nucleate assembly of the platform of the 30S subunit by binding and bridging several RNA helices of the 16S rRNA. Forms an intersubunit bridge (bridge B4) with the 23S rRNA of the 50S subunit in the ribosome. In Delftia acidovorans (strain DSM 14801 / SPH-1), this protein is Small ribosomal subunit protein uS15.